Consider the following 235-residue polypeptide: UPF0502 protein Bcep18194_B0081 (235 aa).

It belongs to the UPF0502 family.

The protein is UPF0502 protein Bcep18194_B0081 of Burkholderia lata (strain ATCC 17760 / DSM 23089 / LMG 22485 / NCIMB 9086 / R18194 / 383).